The chain runs to 479 residues: Trigger factor (479 aa).

The PPIase FKBP-type domain occupies 174 to 261 (GDIAVVSFSG…LKELKTRELP (88 aa)). Residues 437 to 479 (KVLESEAKTSKPAAKSKGSKTKSTKTKTNKAKTEKPASDKTKS) form a disordered region. Over residues 453–466 (KGSKTKSTKTKTNK) the composition is skewed to basic residues. Positions 467-479 (AKTEKPASDKTKS) are enriched in basic and acidic residues.

The protein belongs to the FKBP-type PPIase family. Tig subfamily.

The protein localises to the cytoplasm. The catalysed reaction is [protein]-peptidylproline (omega=180) = [protein]-peptidylproline (omega=0). Its function is as follows. Involved in protein export. Acts as a chaperone by maintaining the newly synthesized protein in an open conformation. Functions as a peptidyl-prolyl cis-trans isomerase. This Prochlorococcus marinus (strain MIT 9303) protein is Trigger factor.